A 75-amino-acid chain; its full sequence is UPF0057 membrane protein At2g24040 (75 aa).

2 consecutive transmembrane segments (helical) span residues 4–24 and 33–53; these read SCEL…GVCL and FFIC…YAIY.

Belongs to the UPF0057 (PMP3) family.

The protein resides in the membrane. The sequence is that of UPF0057 membrane protein At2g24040 from Arabidopsis thaliana (Mouse-ear cress).